We begin with the raw amino-acid sequence, 465 residues long: Glutathione reductase (465 aa).

S16 and G17 together coordinate FAD. S16 contributes to the glutathione binding site. Residue R23 coordinates glutathione. 4 residues coordinate FAD: E42, T49, C50, and K58. A disulfide bond links C50 and C55. Glutathione is bound at residue Y108. Residue G124 coordinates FAD. NADP(+) contacts are provided by A187, I190, E193, R210, R216, and G276. D318 contributes to the FAD binding site. L324 is a binding site for NADP(+). T326 serves as a coordination point for FAD. R334 lines the glutathione pocket. Position 357 (V357) interacts with NADP(+). H454 is a binding site for FAD. Residue H454 is the Proton acceptor of the active site.

This sequence belongs to the class-I pyridine nucleotide-disulfide oxidoreductase family. Requires FAD as cofactor.

Its subcellular location is the cytoplasm. The enzyme catalyses 2 glutathione + NADP(+) = glutathione disulfide + NADPH + H(+). Its function is as follows. Catalyzes the reduction of glutathione disulfide (GSSG) to reduced glutathione (GSH). Constitutes the major mechanism to maintain a high GSH:GSSG ratio in the cytosol. The amount of GSH may affect the determination of cell fate. This chain is Glutathione reductase (gsr), found in Dictyostelium discoideum (Social amoeba).